Here is a 75-residue protein sequence, read N- to C-terminus: Small ribosomal subunit protein bS18 (75 aa).

The protein belongs to the bacterial ribosomal protein bS18 family. In terms of assembly, part of the 30S ribosomal subunit. Forms a tight heterodimer with protein bS6.

Binds as a heterodimer with protein bS6 to the central domain of the 16S rRNA, where it helps stabilize the platform of the 30S subunit. The protein is Small ribosomal subunit protein bS18 of Chromobacterium violaceum (strain ATCC 12472 / DSM 30191 / JCM 1249 / CCUG 213 / NBRC 12614 / NCIMB 9131 / NCTC 9757 / MK).